The primary structure comprises 221 residues: Transcription factor bHLH148 (221 aa).

2 disordered regions span residues 1–45 and 70–89; these read MASL…GEIH and LNSSASTSSSPTAQKRGKAV. 2 stretches are compositionally biased toward low complexity: residues 26–41 and 72–82; these read SASSAASSRSSASSVS and SSASTSSSPTA. Residues 148 to 197 enclose the bHLH domain; sequence KRRVSVLRLNKKSIPDVNRKVRVLGRLVPGCGKQSVPVILEEATDYIQAL.

In terms of assembly, homodimer. Interacts with PRE3. Binds to RSA1.

It is found in the nucleus. BHLH transcription factor that binds DNA on specific sequence 5'-CANNTG-3' in target gene promoters. Negatively regulates brassinosteroid signaling. Together with BHLH148/RITF1, regulates the transcription of several genes involved in the detoxification of reactive oxygen species (ROS) generated by salt (NaCl) stress. Confers tolerance to salt and to the oxidative stress-inducing reagents hydrogen peroxide H(2)O(2) and methyl viologen (MV). In Arabidopsis thaliana (Mouse-ear cress), this protein is Transcription factor bHLH148.